Here is a 193-residue protein sequence, read N- to C-terminus: MADIRLIVGLGNPGPEYENTRHNAGEWFLNQLADTYNAPLKPETKFFGKTARITIDGKDIRLLYPTTFMNKSGQAVAALANFYRIEPEQILVAFDELDLPPGVAKYKVGGSSSQNGVRDIVARMGNNKNFLRLRIGIGHPGHKSRVTGHVLGKPSAEEKTAIESAIDEAVRCTEILLKEDLKQAQNRLHSHKV.

Tyrosine 17 contacts tRNA. Histidine 22 acts as the Proton acceptor in catalysis. Positions 68, 70, and 115 each coordinate tRNA.

It belongs to the PTH family. Monomer.

Its subcellular location is the cytoplasm. It carries out the reaction an N-acyl-L-alpha-aminoacyl-tRNA + H2O = an N-acyl-L-amino acid + a tRNA + H(+). Functionally, hydrolyzes ribosome-free peptidyl-tRNAs (with 1 or more amino acids incorporated), which drop off the ribosome during protein synthesis, or as a result of ribosome stalling. Catalyzes the release of premature peptidyl moieties from peptidyl-tRNA molecules trapped in stalled 50S ribosomal subunits, and thus maintains levels of free tRNAs and 50S ribosomes. In Alteromonas mediterranea (strain DSM 17117 / CIP 110805 / LMG 28347 / Deep ecotype), this protein is Peptidyl-tRNA hydrolase.